The primary structure comprises 302 residues: Ribosomal protein L11 methyltransferase (302 aa).

Positions 148, 169, 191, and 237 each coordinate S-adenosyl-L-methionine.

The protein belongs to the methyltransferase superfamily. PrmA family.

It is found in the cytoplasm. The catalysed reaction is L-lysyl-[protein] + 3 S-adenosyl-L-methionine = N(6),N(6),N(6)-trimethyl-L-lysyl-[protein] + 3 S-adenosyl-L-homocysteine + 3 H(+). Methylates ribosomal protein L11. The sequence is that of Ribosomal protein L11 methyltransferase from Desulfosudis oleivorans (strain DSM 6200 / JCM 39069 / Hxd3) (Desulfococcus oleovorans).